Reading from the N-terminus, the 235-residue chain is Aspartate/glutamate leucyltransferase (235 aa).

It belongs to the R-transferase family. Bpt subfamily.

The protein localises to the cytoplasm. It carries out the reaction N-terminal L-glutamyl-[protein] + L-leucyl-tRNA(Leu) = N-terminal L-leucyl-L-glutamyl-[protein] + tRNA(Leu) + H(+). The catalysed reaction is N-terminal L-aspartyl-[protein] + L-leucyl-tRNA(Leu) = N-terminal L-leucyl-L-aspartyl-[protein] + tRNA(Leu) + H(+). Its function is as follows. Functions in the N-end rule pathway of protein degradation where it conjugates Leu from its aminoacyl-tRNA to the N-termini of proteins containing an N-terminal aspartate or glutamate. This is Aspartate/glutamate leucyltransferase from Pseudomonas putida (strain ATCC 700007 / DSM 6899 / JCM 31910 / BCRC 17059 / LMG 24140 / F1).